A 280-amino-acid polypeptide reads, in one-letter code: MTRCTADNSLTNPAYRRRTMATGEMKEFLGIKGTEPTDFGINSDAQDLPSPSRQASTRRMSIGESIDGKINDWEEPRLDIEGFVVDYFTHRIRQNGMEWFGAPGLPCGVQPEHEMMRVMGTIFEKKHAENFETFCEQLLAVPRISFSLYQDVVRTVGNAQTDQCPMSYGRLIGLISFGGFVAAKMMESVELQGQVRNLFVYTSLFIKTRIRNNWKEHNRSWDDFMTLGKQMKEDYERAEAEKVGRRKQNRRWSMIGAGVTAGAIGIVGVVVCGRMMFSLK.

The interval 33–59 is disordered; it reads GTEPTDFGINSDAQDLPSPSRQASTRR. The span at 43-59 shows a compositional bias: polar residues; sequence SDAQDLPSPSRQASTRR. The BH4 motif lies at 80–99; sequence IEGFVVDYFTHRIRQNGMEW. Positions 160-179 match the BH1 motif; it reads QTDQCPMSYGRLIGLISFGG. The BH2 motif lies at 213–229; sequence NWKEHNRSWDDFMTLGK.

The protein belongs to the Bcl-2 family. In terms of assembly, interacts with asymmetric homodimer ced-4; the interaction sequesters ced-4. Interacts with egl-1; the interaction results in ced-4 release. Interacts with dre-1; the interaction inhibits ced-9 activity, either directly or indirectly. Interacts with dct-1. May form a complex composed of ced-9, ced-4 and mac-1. Interacts with dynamin-related protein drp-1 (via residues 280-502); the interaction is enhanced by GTP rather than GDP; the interaction is probably direct and may occur at the mitochondrion. Interaction with drp-1 may be enhanced by interaction of ced-9 with egl-1, but not with ced-4. A ced-9/egl-1 complex may recruit drp-1 to the mitochondrial surface. Interacts with fzo-1; interaction may be suppressed by interaction of ced-9 with egl-1.

The protein localises to the perikaryon. It localises to the synapse. It is found in the endomembrane system. Its subcellular location is the mitochondrion membrane. The protein resides in the cytoplasm. Plays a major role in programmed cell death (PCD, apoptosis). egl-1 binds to and directly inhibits the activity of ced-9, releasing the cell death activator ced-4 from a ced-9/ced-4 containing protein complex and allowing ced-4 to activate the cell-killing caspase ced-3. During larval development, required for the elimination of transient presynaptic components downstream of egl-1 and upstream of ced-4 and ced-3 apoptotic pathway. Has been shown in one study to be dispensable in mitochondrial dynamics and morphology during early embryonic development. However, another study shows that a egl-1/ced-9 containing complex may promote drp-1-dependent mitochondrial fission. The chain is Apoptosis regulator ced-9 (ced-9) from Caenorhabditis elegans.